A 344-amino-acid polypeptide reads, in one-letter code: RNA-binding protein squid (344 aa).

The tract at residues 1–55 (MAENKQVDTEINGEDFTKDVTADGPGSENGDAGAAGSTNGSSDNQSAASGQRDDD) is disordered. Residues 36–49 (GSTNGSSDNQSAAS) show a composition bias toward polar residues. 2 consecutive RRM domains span residues 56–138 (RKLF…HGKI) and 136–213 (GKIF…RATP). Serine 148 is modified (phosphoserine). Disordered regions lie at residues 214–238 (KPEN…RGGY) and 301–344 (GGGG…HQPY). The tract at residues 215 to 254 (PENQMMGGMRGGPRGGMRGGRGGYGGRGGYNNQWDGQGSY) is M9-like motif. Composition is skewed to gly residues over residues 222–238 (GMRG…RGGY) and 301–337 (GGGG…GGGR). The segment at 300–338 (GGGGGGNMGGGRGGPRGGGGPKGGGGFNGGKQRGGGGRQ) is M9 motif.

Interacts with bru1/Bruno; the interaction is direct but weak, and may play a role in regulation of grk mRNA localization and translation. In terms of assembly, interacts (probably via M9 and M9-like motifs) with Tnpo/Transportin; the interaction is direct and is involved in nuclear localization. Interacts with fs(1)K10 (via N-terminus); may be involved in localization of sqd in the oocyte during oogenesis. As to quaternary structure, interacts (via C-terminus) with Hrb27C; the interaction is RNA dependent. Does not interact with Tnpo/Transportin. Interacts with fs(1)K10 (via N-terminus); may be involved in localization of sqd in the oocyte during oogenesis. Interacts (probably via M9-like motif) with Tnpo/Transportin; the interaction is direct and is involved in nuclear localization. Interacts with fs(1)K10 (via N-terminus); may be involved in localization of sqd in the oocyte during oogenesis.

It is found in the nucleus. Its subcellular location is the cytoplasm. Component of ribonucleosomes. Could be needed to organize a concentration gradient of a dorsalizing morphogen (Dm) originating in the germinal vesicle. At least one of the isoforms is essential in somatic tissues. Interacts with grk mRNA (via 3' UTR) and involved in its localization to the dorsal anterior region of the oocyte during dorsal-ventral axis determination; may function as a ribonuclear protein complex together with otu and Hrb27C. Required for polytene chromosome dispersal in nurse cells during oogenesis; nuclear isoforms play a greater role in this than cytoplasmic isoforms. Functionally, required nonredundantly with isoform A/sqdA for dorsoventral pattern determination during oogenesis. May be important in somatic tissues. Its function is as follows. Required nonredundantly with isoform B/SqdS for dorsoventral pattern determination during oogenesis. In terms of biological role, may lack a role in dorsoventral pattern determination during oogenesis. May be important in somatic tissues. This is RNA-binding protein squid from Drosophila melanogaster (Fruit fly).